The primary structure comprises 312 residues: MAKYDHLELVRLPEQLERRKHGGGSPPPDRDGPRHSAKLRDELNAARDEQRRRRKPEFVNPALILRVQMTGALQEADWEQLGLTVLSSDADRTLVLFASNDEMAEFRTRLDAYQRGAPAGQKNAPYNNFIGGIETIGSVEPRDRIGIRFREDGLVEMADFQDGQAYLIDIEIWDLGERRLRERKLDDIVRYIEARGAEVFDQYVGPSITMLRARLNGVLVRTLLTIEEVASVDLPPTPGIVTAEAMDMVLAEAPPLNTVDQTAPVIGIIDSGLNAHPFLDGIIAGCGFRQSPDRISGNLRTQFSVIPGQRFR.

Basic and acidic residues-rich tracts occupy residues 1-17 (MAKYDHLELVRLPEQLE) and 28-39 (PDRDGPRHSAKL). The tract at residues 1–39 (MAKYDHLELVRLPEQLERRKHGGGSPPPDRDGPRHSAKL) is disordered.

This is an uncharacterized protein from Sinorhizobium fredii (strain NBRC 101917 / NGR234).